Consider the following 98-residue polypeptide: uncharacterized protein (98 aa).

This sequence belongs to the Rv1128c/1148c/1588c/1702c/1945/3466 family.

This is an uncharacterized protein from Mycobacterium tuberculosis (strain ATCC 25618 / H37Rv).